The chain runs to 436 residues: Enolase (436 aa).

Substrate contacts are provided by His-159 and Glu-168. Residue Glu-211 is the Proton donor of the active site. Residues Asp-246, Glu-295, and Asp-322 each contribute to the Mg(2+) site. Substrate is bound by residues Glu-295 and Asp-322. Residue Lys-347 is the Proton acceptor of the active site. Substrate-binding positions include Ser-374–Ser-377 and Lys-398.

This sequence belongs to the enolase family. As to quaternary structure, homodimer. Mg(2+) serves as cofactor.

It is found in the cytoplasm. It carries out the reaction (2R)-2-phosphoglycerate = phosphoenolpyruvate + H2O. It functions in the pathway carbohydrate degradation; glycolysis; pyruvate from D-glyceraldehyde 3-phosphate: step 4/5. The sequence is that of Enolase from Neocallimastix frontalis (Rumen fungus).